A 1162-amino-acid chain; its full sequence is ATP-dependent helicase/deoxyribonuclease subunit B (1162 aa).

The region spanning 1–275 (MELNAYIGRA…QFFKQQYRFN (275 aa)) is the UvrD-like helicase ATP-binding domain. 8–15 (GRAGTGKS) lines the ATP pocket. In terms of domain architecture, UvrD-like helicase C-terminal spans 269-583 (KQQYRFNNKD…SIGTMDLAKV (315 aa)). Cys-784, Cys-1117, Cys-1120, and Cys-1126 together coordinate [4Fe-4S] cluster.

The protein belongs to the helicase family. AddB/RexB type 1 subfamily. Heterodimer of AddA and AddB. It depends on Mg(2+) as a cofactor. Requires [4Fe-4S] cluster as cofactor.

The heterodimer acts as both an ATP-dependent DNA helicase and an ATP-dependent, dual-direction single-stranded exonuclease. Recognizes the chi site generating a DNA molecule suitable for the initiation of homologous recombination. The AddB subunit has 5' -&gt; 3' nuclease activity but not helicase activity. This is ATP-dependent helicase/deoxyribonuclease subunit B from Staphylococcus haemolyticus (strain JCSC1435).